The sequence spans 373 residues: L-threonine 3-dehydrogenase, mitochondrial (373 aa).

Residues 62-67 (GGLGQL), 88-90 (DIR), 106-107 (DI), Y195, K199, and I225 each bind NAD(+). The active-site Proton donor/acceptor is the Y195.

This sequence belongs to the NAD(P)-dependent epimerase/dehydratase family. As to quaternary structure, homodimer.

The protein localises to the mitochondrion. It carries out the reaction L-threonine + NAD(+) = (2S)-2-amino-3-oxobutanoate + NADH + H(+). Its pathway is amino-acid degradation; L-threonine degradation via oxydo-reductase pathway; glycine from L-threonine: step 1/2. In terms of biological role, catalyzes the NAD(+)-dependent oxidation of L-threonine to 2-amino-3-ketobutyrate, mediating L-threonine catabolism. The sequence is that of L-threonine 3-dehydrogenase, mitochondrial from Sus scrofa (Pig).